The chain runs to 101 residues: Protein Tat (101 aa).

The tract at residues 1-24 is interaction with human CREBBP; sequence MDPVDPNLEPWNHPGSQPKTPCNK. The tract at residues 1–48 is transactivation; it reads MDPVDPNLEPWNHPGSQPKTPCNKCFCKVCCWHCQVCFLNKGLGISYG. 3 residues coordinate Zn(2+): Cys22, Cys25, and Cys27. The segment at 22–37 is cysteine-rich; it reads CNKCFCKVCCWHCQVC. Lys28 is subject to N6-acetyllysine; by host PCAF. Zn(2+)-binding residues include Cys30, His33, Cys34, and Cys37. Positions 38-48 are core; the sequence is FLNKGLGISYG. Basic residues predominate over residues 48–57; sequence GRKKRKHRRG. The interval 48 to 101 is disordered; the sequence is GRKKRKHRRGTPQSSKGHQDPVPKQPLPTTRGNPTGPKESKKEVASKAEADQCD. Residues 49–57 carry the Nuclear localization signal, RNA-binding (TAR), and protein transduction motif; that stretch reads RKKRKHRRG. The interval 49 to 86 is interaction with the host capping enzyme RNGTT; the sequence is RKKRKHRRGTPQSSKGHQDPVPKQPLPTTRGNPTGPKE. 2 positions are modified to N6-acetyllysine; by host EP300 and GCN5L2: Lys50 and Lys51. Position 52 is an asymmetric dimethylarginine; by host PRMT6 (Arg52). A Glycyl lysine isopeptide (Lys-Gly) (interchain with G-Cter in ubiquitin) cross-link involves residue Lys71. Residues 85–101 show a composition bias toward basic and acidic residues; it reads KESKKEVASKAEADQCD.

The protein belongs to the lentiviruses Tat family. As to quaternary structure, interacts with host CCNT1. Associates with the P-TEFb complex composed at least of Tat, P-TEFb (CDK9 and CCNT1), TAR RNA, RNA Pol II. Recruits the HATs CREBBP, TAF1/TFIID, EP300, PCAF and GCN5L2. Interacts with host KAT5/Tip60; this interaction targets the latter to degradation. Interacts with the host deacetylase SIRT1. Interacts with host capping enzyme RNGTT; this interaction stimulates RNGTT. Binds to host KDR, and to the host integrins ITGAV/ITGB3 and ITGA5/ITGB1. Interacts with host KPNB1/importin beta-1 without previous binding to KPNA1/importin alpha-1. Interacts with EIF2AK2. Interacts with host nucleosome assembly protein NAP1L1; this interaction may be required for the transport of Tat within the nucleus, since the two proteins interact at the nuclear rim. Interacts with host C1QBP/SF2P32; this interaction involves lysine-acetylated Tat. Interacts with the host chemokine receptors CCR2, CCR3 and CXCR4. Interacts with host DPP4/CD26; this interaction may trigger an anti-proliferative effect. Interacts with host LDLR. Interacts with the host extracellular matrix metalloproteinase MMP1. Interacts with host PRMT6; this interaction mediates Tat's methylation. Interacts with, and is ubiquitinated by MDM2/Hdm2. Interacts with host PSMC3 and HTATIP2. Interacts with STAB1; this interaction may overcome SATB1-mediated repression of IL2 and IL2RA (interleukin) in T cells by binding to the same domain than HDAC1. Interacts (when acetylated) with human CDK13, thereby increasing HIV-1 mRNA splicing and promoting the production of the doubly spliced HIV-1 protein Nef. Interacts with host TBP; this interaction modulates the activity of transcriptional pre-initiation complex. Interacts with host RELA. Interacts with host PLSCR1; this interaction negatively regulates Tat transactivation activity by altering its subcellular distribution. In terms of processing, asymmetrical arginine methylation by host PRMT6 seems to diminish the transactivation capacity of Tat and affects the interaction with host CCNT1. Post-translationally, acetylation by EP300, CREBBP, GCN5L2/GCN5 and PCAF regulates the transactivation activity of Tat. EP300-mediated acetylation of Lys-50 promotes dissociation of Tat from the TAR RNA through the competitive binding to PCAF's bromodomain. In addition, the non-acetylated Tat's N-terminus can also interact with PCAF. PCAF-mediated acetylation of Lys-28 enhances Tat's binding to CCNT1. Lys-50 is deacetylated by SIRT1. Polyubiquitination by host MDM2 does not target Tat to degradation, but activates its transactivation function and fosters interaction with CCNT1 and TAR RNA. In terms of processing, phosphorylated by EIF2AK2 on serine and threonine residues adjacent to the basic region important for TAR RNA binding and function. Phosphorylation of Tat by EIF2AK2 is dependent on the prior activation of EIF2AK2 by dsRNA.

It is found in the host nucleus. The protein localises to the host nucleolus. The protein resides in the host cytoplasm. It localises to the secreted. Functionally, transcriptional activator that increases RNA Pol II processivity, thereby increasing the level of full-length viral transcripts. Recognizes a hairpin structure at the 5'-LTR of the nascent viral mRNAs referred to as the transactivation responsive RNA element (TAR) and recruits the cyclin T1-CDK9 complex (P-TEFb complex) that will in turn hyperphosphorylate the RNA polymerase II to allow efficient elongation. The CDK9 component of P-TEFb and other Tat-activated kinases hyperphosphorylate the C-terminus of RNA Pol II that becomes stabilized and much more processive. Other factors such as HTATSF1/Tat-SF1, SUPT5H/SPT5, and HTATIP2 are also important for Tat's function. Besides its effect on RNA Pol II processivity, Tat induces chromatin remodeling of proviral genes by recruiting the histone acetyltransferases (HATs) CREBBP, EP300 and PCAF to the chromatin. This also contributes to the increase in proviral transcription rate, especially when the provirus integrates in transcriptionally silent region of the host genome. To ensure maximal activation of the LTR, Tat mediates nuclear translocation of NF-kappa-B by interacting with host RELA. Through its interaction with host TBP, Tat may also modulate transcription initiation. Tat can reactivate a latently infected cell by penetrating in it and transactivating its LTR promoter. In the cytoplasm, Tat is thought to act as a translational activator of HIV-1 mRNAs. In terms of biological role, extracellular circulating Tat can be endocytosed by surrounding uninfected cells via the binding to several surface receptors such as CD26, CXCR4, heparan sulfate proteoglycans (HSPG) or LDLR. Neurons are rarely infected, but they internalize Tat via their LDLR. Through its interaction with nuclear HATs, Tat is potentially able to control the acetylation-dependent cellular gene expression. Modulates the expression of many cellular genes involved in cell survival, proliferation or in coding for cytokines or cytokine receptors. Tat plays a role in T-cell and neurons apoptosis. Tat induced neurotoxicity and apoptosis probably contribute to neuroAIDS. Circulating Tat also acts as a chemokine-like and/or growth factor-like molecule that binds to specific receptors on the surface of the cells, affecting many cellular pathways. In the vascular system, Tat binds to ITGAV/ITGB3 and ITGA5/ITGB1 integrins dimers at the surface of endothelial cells and competes with bFGF for heparin-binding sites, leading to an excess of soluble bFGF. The chain is Protein Tat from Homo sapiens (Human).